The sequence spans 302 residues: tRNA pseudouridine synthase B (302 aa).

Asp45 functions as the Nucleophile in the catalytic mechanism.

The protein belongs to the pseudouridine synthase TruB family. Type 1 subfamily.

It catalyses the reaction uridine(55) in tRNA = pseudouridine(55) in tRNA. Functionally, responsible for synthesis of pseudouridine from uracil-55 in the psi GC loop of transfer RNAs. The polypeptide is tRNA pseudouridine synthase B (Francisella tularensis subsp. novicida (strain U112)).